A 210-amino-acid polypeptide reads, in one-letter code: Probable molybdenum cofactor guanylyltransferase (210 aa).

GTP is bound by residues L18–G20, K31, N59, D86, and D111. Residue D111 participates in Mg(2+) binding.

It belongs to the MobA family. Requires Mg(2+) as cofactor.

It localises to the cytoplasm. The enzyme catalyses Mo-molybdopterin + GTP + H(+) = Mo-molybdopterin guanine dinucleotide + diphosphate. Transfers a GMP moiety from GTP to Mo-molybdopterin (Mo-MPT) cofactor (Moco or molybdenum cofactor) to form Mo-molybdopterin guanine dinucleotide (Mo-MGD) cofactor. The protein is Probable molybdenum cofactor guanylyltransferase (nasC) of Haloferax mediterranei (strain ATCC 33500 / DSM 1411 / JCM 8866 / NBRC 14739 / NCIMB 2177 / R-4) (Halobacterium mediterranei).